Here is a 476-residue protein sequence, read N- to C-terminus: ATP synthase subunit beta (476 aa).

152 to 159 (GGAGVGKT) is an ATP binding site.

Belongs to the ATPase alpha/beta chains family. As to quaternary structure, F-type ATPases have 2 components, CF(1) - the catalytic core - and CF(0) - the membrane proton channel. CF(1) has five subunits: alpha(3), beta(3), gamma(1), delta(1), epsilon(1). CF(0) has three main subunits: a(1), b(2) and c(9-12). The alpha and beta chains form an alternating ring which encloses part of the gamma chain. CF(1) is attached to CF(0) by a central stalk formed by the gamma and epsilon chains, while a peripheral stalk is formed by the delta and b chains.

It localises to the cell inner membrane. It carries out the reaction ATP + H2O + 4 H(+)(in) = ADP + phosphate + 5 H(+)(out). In terms of biological role, produces ATP from ADP in the presence of a proton gradient across the membrane. The catalytic sites are hosted primarily by the beta subunits. The polypeptide is ATP synthase subunit beta (Granulibacter bethesdensis (strain ATCC BAA-1260 / CGDNIH1)).